The sequence spans 829 residues: Protein Jade-1 (829 aa).

A compositionally biased stretch (polar residues) spans 1-10; that stretch reads MKRSRVPSTS. The segment at 1 to 40 is disordered; that stretch reads MKRSRVPSTSEDSDNGSNSTSWSQHSNSKHRKQSGKRPSE. Over residues 15 to 26 the composition is skewed to low complexity; that stretch reads NGSNSTSWSQHS. The PHD-type 1 zinc-finger motif lies at 196 to 246; that stretch reads DVVCDVCQSPDGEDGNEMVFCDKCNICVHQACYGILKVPEGSWLCRTCALG. The segment at 248–282 adopts a C2HC pre-PHD-type zinc-finger fold; sequence FPKCHLCPKKGGAMKPTRSGTKWVHVSCALWIPEV. Residues 306–362 form a PHD-type 2 zinc finger; that stretch reads LICCLCKEKTGACIQCSAKSCRVAFHVTCGLHCGLKMNTILTEADEVKFKSFCPKHS. Disordered regions lie at residues 368-408, 556-651, and 697-829; these read EEEG…PEET, PPVP…RRKS, and ATAP…VLAS. Positions 374–390 are enriched in basic and acidic residues; that stretch reads DRPVKVPTREDRSRNRG. 3 stretches are compositionally biased toward polar residues: residues 394–405, 570–586, and 607–619; these read SASSQTRLSQNP, GQNSTLSSSEKGSNSYR, and SGDSVRSETVMSA. Over residues 622 to 648 the composition is skewed to basic and acidic residues; the sequence is RRSEGRTRSGESHRKEEESERPLEDRR. The span at 697–714 shows a compositional bias: polar residues; sequence ATAPNMYSGSPRKTNASH. Positions 738–754 are enriched in basic and acidic residues; the sequence is KRSERTSAGRQTERQEA. Residues 762–774 are compositionally biased toward low complexity; that stretch reads SSLKTFSTSPSSP. A compositionally biased stretch (basic and acidic residues) spans 782-792; that stretch reads TGSENRRHLEE.

Belongs to the JADE family. As to quaternary structure, component of the HBO1 complex composed.

The protein localises to the nucleus. It is found in the chromosome. The protein resides in the cytoplasm. Its subcellular location is the cytoskeleton. It localises to the cilium basal body. Its function is as follows. Scaffold subunit of some HBO1 complexes, which have a histone H4 acetyltransferase activity. Plays a key role in HBO1 complex by directing KAT7/HBO1 specificity towards histone H4 acetylation (H4K5ac, H4K8ac and H4K12ac), regulating DNA replication initiation, regulating DNA replication initiation. This is Protein Jade-1 (jade1) from Danio rerio (Zebrafish).